The chain runs to 196 residues: MIVPPNSAAPSSSLVPAGSAARSTVQGYDPKLHDPYFDGLSGQLADKGFVTAAADDLITWARTGSLMWMTFGLACCAVEMMHSAMPRYDLERYGFAPRASPRQSDVMIVAGTLTNKMAPALRKVYDQMPEPRYVISMGSCANGGGYYYYSYSVVRGCDRIVPIDIYVPGCPPTAEALVYGVLQLQKKIRRTGTIER.

Residues Cys75, Cys76, Cys140, and Cys170 each contribute to the [4Fe-4S] cluster site.

It belongs to the complex I 20 kDa subunit family. In terms of assembly, NDH-1 is composed of 14 different subunits. Subunits NuoB, C, D, E, F, and G constitute the peripheral sector of the complex. It depends on [4Fe-4S] cluster as a cofactor.

It is found in the cell inner membrane. It catalyses the reaction a quinone + NADH + 5 H(+)(in) = a quinol + NAD(+) + 4 H(+)(out). NDH-1 shuttles electrons from NADH, via FMN and iron-sulfur (Fe-S) centers, to quinones in the respiratory chain. Couples the redox reaction to proton translocation (for every two electrons transferred, four hydrogen ions are translocated across the cytoplasmic membrane), and thus conserves the redox energy in a proton gradient. This chain is NADH-quinone oxidoreductase subunit B, found in Caulobacter sp. (strain K31).